A 301-amino-acid chain; its full sequence is Protein phosphatase 1 regulatory subunit 3B (301 aa).

The PP1-binding motif motif lies at Arg79–Phe82. The CBM21 domain occupies Arg142–Val250.

Interacts with glycogen, PPP1CC catalytic subunit of PP1 and PYGL. Associates with glycogen particles. Forms complexes with debranching enzyme, glycogen phosphorylase, glycogen synthase and phosphorylase kinase which is necessary for its regulation of PP1 activity.

Its function is as follows. Acts as a glycogen-targeting subunit for phosphatase PP1. Facilitates interaction of the PP1 with enzymes of the glycogen metabolism and regulates its activity. Suppresses the rate at which PP1 dephosphorylates (inactivates) glycogen phosphorylase and enhances the rate at which it activates glycogen synthase and therefore limits glycogen breakdown. The sequence is that of Protein phosphatase 1 regulatory subunit 3B (ppp1r3b) from Xenopus tropicalis (Western clawed frog).